Here is a 101-residue protein sequence, read N- to C-terminus: Ribonuclease P protein component 1 (101 aa).

Belongs to the eukaryotic/archaeal RNase P protein component 1 family. As to quaternary structure, consists of a catalytic RNA component and at least 4-5 protein subunits.

The protein localises to the cytoplasm. It catalyses the reaction Endonucleolytic cleavage of RNA, removing 5'-extranucleotides from tRNA precursor.. Functionally, part of ribonuclease P, a protein complex that generates mature tRNA molecules by cleaving their 5'-ends. In Methanococcoides burtonii (strain DSM 6242 / NBRC 107633 / OCM 468 / ACE-M), this protein is Ribonuclease P protein component 1.